The primary structure comprises 560 residues: Dimethylaniline monooxygenase [N-oxide-forming] 4 (560 aa).

FAD contacts are provided by residues 9–13 (GAGVS), Glu-32, and 40–41 (LW). NADP(+) contacts are provided by residues 60 to 61 (TN) and 195 to 198 (TGGD). A helical membrane pass occupies residues 510–530 (LSHYLIAWGAPVLLVSLLLIY).

Belongs to the FMO family. FAD serves as cofactor.

It is found in the microsome membrane. It localises to the endoplasmic reticulum membrane. It carries out the reaction N,N-dimethylaniline + NADPH + O2 + H(+) = N,N-dimethylaniline N-oxide + NADP(+) + H2O. This protein is involved in the oxidative metabolism of a variety of xenobiotics such as drugs and pesticides. This Mus musculus (Mouse) protein is Dimethylaniline monooxygenase [N-oxide-forming] 4 (Fmo4).